A 352-amino-acid chain; its full sequence is MSEPQSWSVMASQMTSAQLIRVYLDGSMGIGKTSMLNEIPTHSLMGVPVLKVFEPMKYWRYYFTDLVTTVNDTCDRRRRGEFSLFQSSMIVTALQSKFADPYLVFHERLSSKCHRITGTRGNPSLILILDRHPISATVCFPIARHLTGDCSLEMLISMIIRLPQEPPGCNLVIVDLHDEKEHVSRLSSRNRTGEKTDLLMLRALNAVYSCLVDTIMYANHICPYSKDEWESEWLDLPWFDTSLATTFINEPRTDYRGSRVSLHHTLLAIFKRRELCAEDGSLSTTHAWILWGLLMKLRNINVERFNITGLSTTKCVESFMDTMSERLVTHMSWNDAFEIEADVLAYNKEMAM.

26 to 33 (GSMGIGKT) lines the ATP pocket. Glu54 serves as the catalytic Proton acceptor. Gln95 lines the substrate pocket. Arg185 provides a ligand contact to ATP. Arg191 lines the substrate pocket.

Belongs to the herpesviridae thymidine kinase family. In terms of assembly, homodimer.

The enzyme catalyses thymidine + ATP = dTMP + ADP + H(+). Catalyzes the transfer of the gamma-phospho group of ATP to thymidine to generate dTMP in the salvage pathway of pyrimidine synthesis. The dTMP serves as a substrate for DNA polymerase during viral DNA replication. Allows the virus to be reactivated and to grow in non-proliferative cells lacking a high concentration of phosphorylated nucleic acid precursors. The polypeptide is Thymidine kinase (Gallid herpesvirus 2 (strain Chicken/Md5/ATCC VR-987) (GaHV-2)).